The chain runs to 188 residues: Elongation factor P (188 aa).

Residue lysine 34 is modified to N6-(3,6-diaminohexanoyl)-5-hydroxylysine.

The protein belongs to the elongation factor P family. In terms of processing, may be beta-lysylated on the epsilon-amino group of Lys-34 by the combined action of EpmA and EpmB, and then hydroxylated on the C5 position of the same residue by EpmC (if this protein is present). Lysylation is critical for the stimulatory effect of EF-P on peptide-bond formation. The lysylation moiety may extend toward the peptidyltransferase center and stabilize the terminal 3-CCA end of the tRNA. Hydroxylation of the C5 position on Lys-34 may allow additional potential stabilizing hydrogen-bond interactions with the P-tRNA.

It is found in the cytoplasm. The protein operates within protein biosynthesis; polypeptide chain elongation. Its function is as follows. Involved in peptide bond synthesis. Alleviates ribosome stalling that occurs when 3 or more consecutive Pro residues or the sequence PPG is present in a protein, possibly by augmenting the peptidyl transferase activity of the ribosome. Modification of Lys-34 is required for alleviation. In Vibrio vulnificus (strain CMCP6), this protein is Elongation factor P.